We begin with the raw amino-acid sequence, 332 residues long: 2,3-diketo-L-gulonate reductase (332 aa).

The Proton donor role is filled by His44. Residues 168–174 (ITMVDMS), 224–225 (WK), and 304–306 (GHE) contribute to the NAD(+) site.

This sequence belongs to the LDH2/MDH2 oxidoreductase family. DlgD subfamily. In terms of assembly, homodimer.

Its subcellular location is the cytoplasm. The catalysed reaction is 3-dehydro-L-gulonate + NAD(+) = 2,3-dioxo-L-gulonate + NADH + H(+). It carries out the reaction 3-dehydro-L-gulonate + NADP(+) = 2,3-dioxo-L-gulonate + NADPH + H(+). Its function is as follows. Catalyzes the reduction of 2,3-diketo-L-gulonate in the presence of NADH, to form 3-keto-L-gulonate. The polypeptide is 2,3-diketo-L-gulonate reductase (Escherichia coli O8 (strain IAI1)).